Consider the following 262-residue polypeptide: Nurim (262 aa).

Topologically, residues 1–4 are nuclear; it reads MAPA. The helical transmembrane segment at 5–28 threads the bilayer; it reads LLLVPAALASFILAFGTGVEFVRF. At 29–58 the chain is on the perinuclear space side; that stretch reads TSLRPLLGGIPESGGPDARHGWLAALQDRS. A helical membrane pass occupies residues 59-80; sequence ILASLAWDLCLLLLFVVQHSLM. Over 81 to 97 the chain is Nuclear; sequence ATEAVKAWTSRYFGVLQ. Residues 98–114 traverse the membrane as a helical segment; that stretch reads RSLYVACTALALQLVMR. Over 115 to 133 the chain is Perinuclear space; it reads YWETTPRGPVLWEARAEPW. The helical transmembrane segment at 134–164 threads the bilayer; sequence ATWVPLLCFVLHVVSWLLIFSILLVFDYAEL. The Nuclear portion of the chain corresponds to 165 to 191; it reads MGLKQVYYHVLGLGEPLSLKSPRALRL. The chain crosses the membrane as a helical span at residues 192–210; the sequence is FSHLRHPVCVELLTVLWVV. Over 211 to 216 the chain is Perinuclear space; that stretch reads PTLGTD. A helical membrane pass occupies residues 217-234; it reads RLLLALLFTLYLGLAHGL. At 235 to 262 the chain is on the nuclear side; it reads DQQDLRYLRSQLQRKLHLLSRPQDGEAE.

Belongs to the nurim family.

The protein resides in the nucleus inner membrane. The chain is Nurim (Nrm) from Mus musculus (Mouse).